The chain runs to 230 residues: Urease accessory protein UreF (230 aa).

It belongs to the UreF family. As to quaternary structure, ureD, UreF and UreG form a complex that acts as a GTP-hydrolysis-dependent molecular chaperone, activating the urease apoprotein by helping to assemble the nickel containing metallocenter of UreC. The UreE protein probably delivers the nickel.

The protein resides in the cytoplasm. Its function is as follows. Required for maturation of urease via the functional incorporation of the urease nickel metallocenter. This Marinomonas sp. (strain MWYL1) protein is Urease accessory protein UreF.